The sequence spans 181 residues: Iron sulfur cluster assembly protein 1, mitochondrial (181 aa).

The interval 159–181 (RKTKNPTLGAEAAETPAAATATA) is disordered. Positions 168–181 (AEAAETPAAATATA) are enriched in low complexity.

It belongs to the NifU family. Component of the core Fe-S cluster (ISC) assembly machinery. Requires [2Fe-2S] cluster as cofactor.

The protein resides in the mitochondrion matrix. The protein operates within cofactor biosynthesis; iron-sulfur cluster biosynthesis. Functionally, scaffold protein for the de novo synthesis of iron-sulfur (Fe-S) clusters within mitochondria, which is required for maturation of both mitochondrial and cytoplasmic [2Fe-2S] and [4Fe-4S] proteins. First, a [2Fe-2S] cluster is transiently assembled on the scaffold protein ISU1. In a second step, the cluster is released from ISU1, transferred to a glutaredoxin, followed by the formation of mitochondrial [2Fe-2S] proteins, the synthesis of [4Fe-4S] clusters and their target-specific insertion into the recipient apoproteins. Cluster assembly on ISU1 depends on the function of the cysteine desulfurase complex NFS1-ISD11, which serves as the sulfur donor for cluster synthesis, the iron-binding protein frataxin as the putative iron donor, and the electron transfer chain comprised of ferredoxin reductase and ferredoxin, which receive their electrons from NADH. The sequence is that of Iron sulfur cluster assembly protein 1, mitochondrial (ISU1) from Yarrowia lipolytica (strain CLIB 122 / E 150) (Yeast).